A 36-amino-acid polypeptide reads, in one-letter code: Thrombin (36 aa).

In terms of domain architecture, Peptidase S1 spans 19 to 36; the sequence is IVKGIDAEVASAPMQVML.

This sequence belongs to the peptidase S1 family. As to quaternary structure, forms a heterodimer with SERPINA5. In terms of processing, the gamma-carboxyglutamyl residues, which bind calcium ions, result from the carboxylation of glutamyl residues by a microsomal enzyme, the vitamin K-dependent carboxylase. The modified residues are necessary for the calcium-dependent interaction with a negatively charged phospholipid surface, which is essential for the conversion of prothrombin to thrombin. N-glycosylated. As to expression, expressed by the liver and secreted in plasma.

The protein resides in the secreted. The catalysed reaction is Selective cleavage of Arg-|-Gly bonds in fibrinogen to form fibrin and release fibrinopeptides A and B.. With respect to regulation, inhibited by SERPINA5. Thrombin, which cleaves bonds after Arg and Lys, converts fibrinogen to fibrin and activates factors V, VII, VIII, XIII, and, in complex with thrombomodulin, protein C. Functions in blood homeostasis, inflammation and wound healing. This is Thrombin from Salmo salar (Atlantic salmon).